Here is a 255-residue protein sequence, read N- to C-terminus: L-erythrulose-1-phosphate isomerase (255 aa).

The Electrophile role is filled by His98. The active-site Proton acceptor is the Glu171. Residues Gly177 and Ser214 each contribute to the substrate site.

Belongs to the triosephosphate isomerase family. Homodimer.

It localises to the cytoplasm. It carries out the reaction L-erythrulose 1-phosphate = D-erythrulose 4-phosphate. Its pathway is carbohydrate metabolism; erythritol degradation. In terms of biological role, catalyzes the isomerization of D-erythrulose-4P to L-erythrulose-1P. The polypeptide is L-erythrulose-1-phosphate isomerase (Rhizobium meliloti (strain 1021) (Ensifer meliloti)).